The primary structure comprises 102 residues: uncharacterized protein (102 aa).

The chain crosses the membrane as a helical span at residues 5 to 27 (IYRSNLVIVITLFVSLSYYHTCF).

Its subcellular location is the host membrane. This is an uncharacterized protein from Microplitis demolitor (Parasitoid wasp).